We begin with the raw amino-acid sequence, 177 residues long: Large ribosomal subunit protein uL6 (177 aa).

Belongs to the universal ribosomal protein uL6 family. Part of the 50S ribosomal subunit.

Its function is as follows. This protein binds to the 23S rRNA, and is important in its secondary structure. It is located near the subunit interface in the base of the L7/L12 stalk, and near the tRNA binding site of the peptidyltransferase center. In Methanocella arvoryzae (strain DSM 22066 / NBRC 105507 / MRE50), this protein is Large ribosomal subunit protein uL6.